The following is a 108-amino-acid chain: Thiosulfate sulfurtransferase GlpE (108 aa).

Positions 17 to 105 (HQGAAVLVDI…WHRRFPADVA (89 aa)) constitute a Rhodanese domain. Cysteine 65 (cysteine persulfide intermediate) is an active-site residue.

Belongs to the GlpE family.

Its subcellular location is the cytoplasm. The enzyme catalyses thiosulfate + hydrogen cyanide = thiocyanate + sulfite + 2 H(+). It catalyses the reaction thiosulfate + [thioredoxin]-dithiol = [thioredoxin]-disulfide + hydrogen sulfide + sulfite + 2 H(+). Transferase that catalyzes the transfer of sulfur from thiosulfate to thiophilic acceptors such as cyanide or dithiols. May function in a CysM-independent thiosulfate assimilation pathway by catalyzing the conversion of thiosulfate to sulfite, which can then be used for L-cysteine biosynthesis. The protein is Thiosulfate sulfurtransferase GlpE of Salmonella choleraesuis (strain SC-B67).